The primary structure comprises 407 residues: Phenazine 1,6-dicarboxylic acid hydroxylase PhzS (407 aa).

Positions 17, 134, and 313 each coordinate FAD.

It depends on FAD as a cofactor.

The catalysed reaction is phenazine-1,6-dicarboxylate + NADH + O2 + 2 H(+) = 6-hydroxyphenazine-1-carboxylate + CO2 + NAD(+) + H2O. It catalyses the reaction 6-hydroxyphenazine-1-carboxylate + NADH + O2 + 2 H(+) = 1,6-dihydroxyphenazine + CO2 + NAD(+) + H2O. The enzyme catalyses phenazine-1-carboxylate + NADH + O2 + 2 H(+) = 1-hydroxyphenazine + CO2 + NAD(+) + H2O. Involved in the biosynthesis of phenazine natural products including myxin, an N(5),N(10)-dioxide phenazine antiobiotic, which has antimicrobial activity. Catalyzes the decarboxylative hydroxylations of phenazine 1,6-dicarboxylic acid (PDC) to produce 1,6-dihydroxyphenazine (DHP). Low activity with phenazine 1-carboxylic acid (PCA) to produce 1-hydroxyphenazine. This is Phenazine 1,6-dicarboxylic acid hydroxylase PhzS from Lysobacter antibioticus.